A 754-amino-acid polypeptide reads, in one-letter code: DNA topoisomerase 4 subunit A (754 aa).

Positions 38 to 501 constitute a Topo IIA-type catalytic domain; sequence LPHIGDGLKP…EARALSETEL (464 aa). The O-(5'-phospho-DNA)-tyrosine intermediate role is filled by Tyr-127.

This sequence belongs to the type II topoisomerase GyrA/ParC subunit family. ParC type 1 subfamily. In terms of assembly, heterotetramer composed of ParC and ParE.

The protein resides in the cell membrane. The catalysed reaction is ATP-dependent breakage, passage and rejoining of double-stranded DNA.. Functionally, topoisomerase IV is essential for chromosome segregation. It relaxes supercoiled DNA. Performs the decatenation events required during the replication of a circular DNA molecule. This Pseudomonas aeruginosa (strain ATCC 15692 / DSM 22644 / CIP 104116 / JCM 14847 / LMG 12228 / 1C / PRS 101 / PAO1) protein is DNA topoisomerase 4 subunit A.